A 985-amino-acid polypeptide reads, in one-letter code: MAASVAAAAGRLRRAIGRSCPWQRFSTEPHPPHGAAVRDAFLSFFRDRHGHRLVPSASVRPRGDPSLLFVNAGMNQFKPIFLGTVDPRSEMAGFRRVANSQKCVRAGGRHNDLEDVGRDLSHHTFFEMLGNWAFGGEYFKKEACSMAWELLTQVYGIPEDRLWVSYFSGDSKTGLDPDLETRDIWLSLGVPASRVLSFGLQENFWEMGDTGPCGPCTEIHYDLAGGMGPPQLVELWNLVFMQHYREADGSLHLLPQQHVDTGMGLERLVAVLQGKHSTYDTDLFSPLLDAIHQSCRVPPYSGRVGAADEGRIDTAYRVVADHIRTLSVCIADGVSPGMSGAPLVLRRILRRAVRYSTEVLQAPPGFLGNLVPVVVATLGAAYPELQKNSVKVLIWEIANLVSEDEAAFLASLQRGRRIIDRTVKRLGPSDLFPAEVAWSLSLSGNLGIPLDLVQLMLEEKGVKLDTAGLEQLAQKEAQHRAQQAEAAQEEGLCLDVHALEELHRQGIPTTDDSPKYNYSLRPNGDYEFGLCEAQVLQLYSETGTAVASVGEGQRCGLLLDRTNFYAEQGGQASDRGYLIRTGQQDVLFPVARAQVCGGFILHEAMAPECLQVGDRVQLYVDKAWRMGCMVKHTATHLLNWALRQTLGPTTEQRGSHLNPERLRFDVATQTPLTTEQLRTVESYVQEAVGQDKPVYMEEVPLAHTARIPGLRSLDEVYPDPVRVVSVGVPVAQALAPASQAALQTSVELCCGTHLLSTGAVGDLVIIGDRQLVKGITRLLAITGEQAQQAREVGQSLSQEVEVASERLSRGSRDLLEAHRLSKDIGRLIEFTESAVIPQWQRQEQQTTLKMLQRRANTAIRKLEKSQATEKSQELLKRHSEGPLIVDTVSAQSLSVLVKVVRQLCKQAPSMSVLLLSPQPTGSVLCACQVAQGATPTFTAEAWALAVCSHMGGKAWGSPVIAQGTGHTADLEAALRTARAYALNQL.

The N-terminal 23 residues, 1–23 (MAASVAAAAGRLRRAIGRSCPWQ), are a transit peptide targeting the mitochondrion. Residues R105, H123, W205, and 235 to 237 (LWN) contribute to the ATP site. L-alanine is bound by residues N237 and D260. G264 provides a ligand contact to ATP. 4 residues coordinate Zn(2+): H632, H636, C749, and H753.

Belongs to the class-II aminoacyl-tRNA synthetase family. Monomer. Zn(2+) is required as a cofactor.

The protein localises to the mitochondrion. The enzyme catalyses tRNA(Ala) + L-alanine + ATP = L-alanyl-tRNA(Ala) + AMP + diphosphate. The catalysed reaction is (S)-lactate + ATP + H(+) = (S)-lactoyl-AMP + diphosphate. It catalyses the reaction (S)-lactoyl-AMP + L-lysyl-[protein] = N(6)-[(S)-lactoyl]-L-lysyl-[protein] + AMP + 2 H(+). In terms of biological role, catalyzes the attachment of alanine to tRNA(Ala) in a two-step reaction: alanine is first activated by ATP to form Ala-AMP and then transferred to the acceptor end of tRNA(Ala). Also edits incorrectly charged tRNA(Ala) via its editing domain. In presence of high levels of lactate, also acts as a protein lactyltransferase that mediates lactylation of lysine residues in target proteins, such as CGAS. Acts as an inhibitor of cGAS/STING signaling by catalyzing lactylation of CGAS, preventing the formation of liquid-like droplets in which CGAS is activated. The sequence is that of Alanine--tRNA ligase, mitochondrial (Aars2) from Rattus norvegicus (Rat).